The primary structure comprises 335 residues: Protein-arginine kinase (335 aa).

In terms of domain architecture, Phosphagen kinase C-terminal spans 21 to 244 (VIISSRIRLA…NQIINEEKQI (224 aa)). ATP is bound by residues 24–28 (SSRIR), histidine 82, arginine 115, 166–170 (RASVM), and 197–202 (RGIYGE).

It belongs to the ATP:guanido phosphotransferase family.

The catalysed reaction is L-arginyl-[protein] + ATP = N(omega)-phospho-L-arginyl-[protein] + ADP + H(+). Its function is as follows. Catalyzes the specific phosphorylation of arginine residues in proteins. This is Protein-arginine kinase from Staphylococcus epidermidis (strain ATCC 12228 / FDA PCI 1200).